We begin with the raw amino-acid sequence, 371 residues long: Putative glutamate--cysteine ligase 2 (371 aa).

The protein belongs to the glutamate--cysteine ligase type 2 family. YbdK subfamily.

It catalyses the reaction L-cysteine + L-glutamate + ATP = gamma-L-glutamyl-L-cysteine + ADP + phosphate + H(+). Its function is as follows. ATP-dependent carboxylate-amine ligase which exhibits weak glutamate--cysteine ligase activity. The protein is Putative glutamate--cysteine ligase 2 of Burkholderia cenocepacia (strain HI2424).